The following is a 288-amino-acid chain: Syntaxin-1A (288 aa).

Basic and acidic residues predominate over residues 1–13 (MKDRTQELRTAKD). The segment at 1 to 20 (MKDRTQELRTAKDSDDDDDV) is disordered. Residues 1–265 (MKDRTQELRT…KYQSKARRKK (265 aa)) are Cytoplasmic-facing. A phosphoserine mark is found at Ser14, Ser64, and Ser95. Residues 68–109 (DEKTKEELEELMSDIKKTANKVRSKLKSIEQSIEQEEGLNRS) are a coiled coil. Ser188 carries the phosphoserine; by DAPK1 modification. The t-SNARE coiled-coil homology domain maps to 192–254 (LSEIETRHSE…ERAVSDTKKA (63 aa)). Glycyl lysine isopeptide (Lys-Gly) (interchain with G-Cter in SUMO) cross-links involve residues Lys252, Lys253, and Lys256. The helical; Anchor for type IV membrane protein transmembrane segment at 266 to 286 (IMIIICCVILGIIIASTIGGI) threads the bilayer. At 287-288 (FG) the chain is on the extracellular side.

Belongs to the syntaxin family. Part of the SNARE core complex containing SNAP25, VAMP2 and STX1A; this complex constitutes the basic catalytic machinery of the complex neurotransmitter release apparatus. The SNARE complex interacts with CPLX1. Interacts with STXBP1. The interaction with STXBP1 promotes assembly of the SNARE complex. Interacts (via C-terminus) with KCNB1 (via C-terminus); the interaction increases in a calcium-dependent manner and induces a pore-independent enhancement of exocytosis in neuroendocrine cells, chromaffin cells, pancreatic beta cells and from the soma of dorsal root ganglia (DRG) neurons. Interacts with SYTL4. Interacts with STXBP6. Interacts with PLCL1 (via C2 domain). Interacts with OTOF. Interacts with LGI3. Interacts (via the H3 domain) with SLC6A4 (via the N-terminus); this interaction regulates SLC4A6 channel conductance in thalamocortical neurons. Interacts with SYT6 and SYT8; the interaction is Ca(2+)-dependent. Interacts with VAMP8. Interacts with SNAP23. Interacts with VAPA and SYBU. Interacts with PRRT2. Interacts with SEPT8. Interacts with STXBP5L. Interacts with synaptotagmin-1/SYT1. Interacts with SEPTIN5; in the cerebellar cortex. Interacts with SEPTIN4; in the striatum. Phosphorylated by CK2. Phosphorylation at Ser-188 by DAPK1 significantly decreases its interaction with STXBP1. In terms of processing, phosphorylated by CK2. Phosphorylation at Ser-188 by DAPK1 significantly decreases its interaction with STXBP1. Post-translationally, sumoylated, sumoylation is required for regulation of synaptic vesicle endocytosis. Expressed in the striatum (at protein level). Expressed in the ileum.

It is found in the cytoplasmic vesicle. It localises to the secretory vesicle. The protein resides in the synaptic vesicle membrane. The protein localises to the synapse. Its subcellular location is the synaptosome. It is found in the cell membrane. Functionally, plays an essential role in hormone and neurotransmitter calcium-dependent exocytosis and endocytosis. Part of the SNARE (Soluble NSF Attachment Receptor) complex composed of SNAP25, STX1A and VAMP2 which mediates the fusion of synaptic vesicles with the presynaptic plasma membrane. STX1A and SNAP25 are localized on the plasma membrane while VAMP2 resides in synaptic vesicles. The pairing of the three SNAREs from the N-terminal SNARE motifs to the C-terminal anchors leads to the formation of the SNARE complex, which brings membranes into close proximity and results in final fusion. Participates in the calcium-dependent regulation of acrosomal exocytosis in sperm. Also plays an important role in the exocytosis of hormones such as insulin or glucagon-like peptide 1 (GLP-1). In Mus musculus (Mouse), this protein is Syntaxin-1A (Stx1a).